Here is a 126-residue protein sequence, read N- to C-terminus: Aspartate 1-decarboxylase (126 aa).

Catalysis depends on S25, which acts as the Schiff-base intermediate with substrate; via pyruvic acid. S25 is modified (pyruvic acid (Ser)). Substrate is bound at residue T57. Y58 acts as the Proton donor in catalysis. Position 73-75 (G73–A75) interacts with substrate.

This sequence belongs to the PanD family. As to quaternary structure, heterooctamer of four alpha and four beta subunits. Requires pyruvate as cofactor. In terms of processing, is synthesized initially as an inactive proenzyme, which is activated by self-cleavage at a specific serine bond to produce a beta-subunit with a hydroxyl group at its C-terminus and an alpha-subunit with a pyruvoyl group at its N-terminus.

The protein localises to the cytoplasm. The enzyme catalyses L-aspartate + H(+) = beta-alanine + CO2. It functions in the pathway cofactor biosynthesis; (R)-pantothenate biosynthesis; beta-alanine from L-aspartate: step 1/1. In terms of biological role, catalyzes the pyruvoyl-dependent decarboxylation of aspartate to produce beta-alanine. The polypeptide is Aspartate 1-decarboxylase (Escherichia coli O6:K15:H31 (strain 536 / UPEC)).